Reading from the N-terminus, the 378-residue chain is UPF0754 membrane protein BCE33L0760 (378 aa).

The next 2 helical transmembrane spans lie at 1–21 (MNIW…GGFT) and 357–377 (YLGA…LLFL).

Belongs to the UPF0754 family.

It is found in the cell membrane. This chain is UPF0754 membrane protein BCE33L0760, found in Bacillus cereus (strain ZK / E33L).